Reading from the N-terminus, the 371-residue chain is Protein STRICTOSIDINE SYNTHASE-LIKE 6 (371 aa).

The N-terminal stretch at methionine 1–serine 21 is a signal peptide. 2 N-linked (GlcNAc...) asparagine glycosylation sites follow: asparagine 101 and asparagine 137. A Phosphotyrosine modification is found at tyrosine 303.

It belongs to the strictosidine synthase family.

The protein resides in the vacuole. The chain is Protein STRICTOSIDINE SYNTHASE-LIKE 6 from Arabidopsis thaliana (Mouse-ear cress).